Reading from the N-terminus, the 353-residue chain is S-adenosylmethionine:tRNA ribosyltransferase-isomerase (353 aa).

This sequence belongs to the QueA family. In terms of assembly, monomer.

The protein localises to the cytoplasm. It carries out the reaction 7-aminomethyl-7-carbaguanosine(34) in tRNA + S-adenosyl-L-methionine = epoxyqueuosine(34) in tRNA + adenine + L-methionine + 2 H(+). Its pathway is tRNA modification; tRNA-queuosine biosynthesis. Transfers and isomerizes the ribose moiety from AdoMet to the 7-aminomethyl group of 7-deazaguanine (preQ1-tRNA) to give epoxyqueuosine (oQ-tRNA). This is S-adenosylmethionine:tRNA ribosyltransferase-isomerase from Marinomonas sp. (strain MWYL1).